We begin with the raw amino-acid sequence, 351 residues long: Lipoyl synthase, mitochondrial (351 aa).

Residues cysteine 84, cysteine 89, cysteine 95, cysteine 115, cysteine 119, cysteine 122, and serine 330 each coordinate [4Fe-4S] cluster. The Radical SAM core domain occupies 100-319 (DKSKATATIM…QKRAMDMGFL (220 aa)).

It belongs to the radical SAM superfamily. Lipoyl synthase family. [4Fe-4S] cluster is required as a cofactor.

It is found in the mitochondrion. The catalysed reaction is [[Fe-S] cluster scaffold protein carrying a second [4Fe-4S](2+) cluster] + N(6)-octanoyl-L-lysyl-[protein] + 2 oxidized [2Fe-2S]-[ferredoxin] + 2 S-adenosyl-L-methionine + 4 H(+) = [[Fe-S] cluster scaffold protein] + N(6)-[(R)-dihydrolipoyl]-L-lysyl-[protein] + 4 Fe(3+) + 2 hydrogen sulfide + 2 5'-deoxyadenosine + 2 L-methionine + 2 reduced [2Fe-2S]-[ferredoxin]. The protein operates within protein modification; protein lipoylation via endogenous pathway; protein N(6)-(lipoyl)lysine from octanoyl-[acyl-carrier-protein]: step 2/2. Functionally, catalyzes the radical-mediated insertion of two sulfur atoms into the C-6 and C-8 positions of the octanoyl moiety bound to the lipoyl domains of lipoate-dependent enzymes, thereby converting the octanoylated domains into lipoylated derivatives. In Yarrowia lipolytica (strain CLIB 122 / E 150) (Yeast), this protein is Lipoyl synthase, mitochondrial.